Consider the following 153-residue polypeptide: Ribosome maturation factor RimP (153 aa).

Belongs to the RimP family.

Its subcellular location is the cytoplasm. Functionally, required for maturation of 30S ribosomal subunits. This Nostoc punctiforme (strain ATCC 29133 / PCC 73102) protein is Ribosome maturation factor RimP.